The sequence spans 170 residues: Large ribosomal subunit protein bL9 (170 aa).

Residues 149 to 170 (RTEEADAEESAAEEPAVEEAAE) are disordered. Over residues 153-170 (ADAEESAAEEPAVEEAAE) the composition is skewed to acidic residues.

This sequence belongs to the bacterial ribosomal protein bL9 family.

In terms of biological role, binds to the 23S rRNA. The polypeptide is Large ribosomal subunit protein bL9 (Oleidesulfovibrio alaskensis (strain ATCC BAA-1058 / DSM 17464 / G20) (Desulfovibrio alaskensis)).